We begin with the raw amino-acid sequence, 156 residues long: Transcriptional repressor NrdR (156 aa).

A zinc finger lies at 3–34; the sequence is CPSCQFNGTRVVDSRPVDDNKEIRRRRECESC. The ATP-cone domain maps to 49–139; it reads LVVVKKEGSR…VYRQFKDINV (91 aa).

It belongs to the NrdR family. Zn(2+) is required as a cofactor.

Functionally, negatively regulates transcription of bacterial ribonucleotide reductase nrd genes and operons by binding to NrdR-boxes. The polypeptide is Transcriptional repressor NrdR (Lysinibacillus sphaericus (strain C3-41)).